A 311-amino-acid polypeptide reads, in one-letter code: Pyrimidine-specific ribonucleoside hydrolase RihA (311 aa).

His240 is a catalytic residue.

This sequence belongs to the IUNH family. RihA subfamily.

Its function is as follows. Hydrolyzes with equal efficiency cytidine or uridine to ribose and cytosine or uracil, respectively. In Escherichia coli O45:K1 (strain S88 / ExPEC), this protein is Pyrimidine-specific ribonucleoside hydrolase RihA.